Here is a 116-residue protein sequence, read N- to C-terminus: Methionine-R-sulfoxide reductase B1 (116 aa).

Positions 1-106 constitute a MsrB domain; the sequence is MSFCSFFGGE…FSSSLKFVPK (106 aa). Positions 23, 26, 71, and 74 each coordinate Zn(2+). Selenocysteine 95 acts as the Nucleophile in catalysis. Selenocysteine 95 is a non-standard amino acid (selenocysteine).

It belongs to the MsrB Met sulfoxide reductase family. It depends on Zn(2+) as a cofactor. Truncated MSRB1/SEPX1 proteins produced by failed UGA/Sec decoding are ubiquitinated by the CRL2(FEM1C) E3 ubiquitin-protein ligase complex.

Its subcellular location is the cytoplasm. It is found in the nucleus. The protein resides in the cytoskeleton. It catalyses the reaction L-methionyl-[protein] + [thioredoxin]-disulfide + H2O = L-methionyl-(R)-S-oxide-[protein] + [thioredoxin]-dithiol. The enzyme catalyses [thioredoxin]-disulfide + L-methionine + H2O = L-methionine (R)-S-oxide + [thioredoxin]-dithiol. In terms of biological role, methionine-sulfoxide reductase that specifically reduces methionine (R)-sulfoxide back to methionine. While in many cases, methionine oxidation is the result of random oxidation following oxidative stress, methionine oxidation is also a post-translational modification that takes place on specific residue. Acts as a regulator of actin assembly by reducing methionine (R)-sulfoxide mediated by MICALs (MICAL1, MICAL2 or MICAL3) on actin, thereby promoting filament repolymerization. Plays a role in innate immunity by reducing oxidized actin, leading to actin repolymerization in macrophages. The sequence is that of Methionine-R-sulfoxide reductase B1 (MSRB1) from Pongo abelii (Sumatran orangutan).